The chain runs to 163 residues: Large ribosomal subunit protein uL22c (163 aa).

This sequence belongs to the universal ribosomal protein uL22 family. In terms of assembly, part of the 50S ribosomal subunit.

It is found in the plastid. The protein localises to the chloroplast. Functionally, this protein binds specifically to 23S rRNA. In terms of biological role, the globular domain of the protein is located near the polypeptide exit tunnel on the outside of the subunit, while an extended beta-hairpin is found that lines the wall of the exit tunnel in the center of the 70S ribosome. In Lobularia maritima (Sweet alyssum), this protein is Large ribosomal subunit protein uL22c (rpl22).